The chain runs to 636 residues: DNA-directed RNA polymerase subunit gamma (636 aa).

Residues cysteine 71, cysteine 73, cysteine 86, and cysteine 89 each coordinate Zn(2+). 3 residues coordinate Mg(2+): aspartate 467, aspartate 469, and aspartate 471.

Belongs to the RNA polymerase beta' chain family. RpoC1 subfamily. In cyanobacteria the RNAP catalytic core is composed of 2 alpha, 1 beta, 1 beta', 1 gamma and 1 omega subunit. When a sigma factor is associated with the core the holoenzyme is formed, which can initiate transcription. Mg(2+) serves as cofactor. The cofactor is Zn(2+).

It catalyses the reaction RNA(n) + a ribonucleoside 5'-triphosphate = RNA(n+1) + diphosphate. Its function is as follows. DNA-dependent RNA polymerase catalyzes the transcription of DNA into RNA using the four ribonucleoside triphosphates as substrates. The chain is DNA-directed RNA polymerase subunit gamma from Picosynechococcus sp. (strain ATCC 27264 / PCC 7002 / PR-6) (Agmenellum quadruplicatum).